Consider the following 589-residue polypeptide: Mitoguardin 2 (589 aa).

The next 2 membrane-spanning stretches (helical) occupy residues 11-31 (IIQALAMTVAEIPVFLYTTFG) and 42-62 (PGLRKVLFATALGTVALALAA). The tract at residues 87 to 134 (VPGSVLPVRRSSSAKKGYSRSRVQSPSSKSNDTLSGISSLDPSKHSSS) is disordered. Composition is skewed to low complexity over residues 106-116 (RSRVQSPSSKS) and 123-134 (ISSLDPSKHSSS).

Belongs to the mitoguardin family. As to quaternary structure, homodimer and heterodimer; forms heterodimers with miga1.

Its subcellular location is the mitochondrion outer membrane. In terms of biological role, regulator of mitochondrial fusion: acts by forming homo- and heterodimers at the mitochondrial outer membrane and facilitating the formation of pld6/MitoPLD dimers. May act by regulating phospholipid metabolism via pld6/MitoPLD. The chain is Mitoguardin 2 from Xenopus laevis (African clawed frog).